We begin with the raw amino-acid sequence, 1225 residues long: RNA-directed RNA polymerase VP2 (1225 aa).

The RdRp catalytic domain occupies 497–727; sequence LFLSFMPYTI…NSIVLLQQLV (231 aa).

Belongs to the reoviridae RNA-directed RNA polymerase family. Interacts with VP6.

The catalysed reaction is RNA(n) + a ribonucleoside 5'-triphosphate = RNA(n+1) + diphosphate. In terms of biological role, RNA-directed RNA polymerase that is involved in transcription and genome replication. Following infection, it catalyzes the synthesis of fully conservative plus strands. After core assembly, which consists in recruitment of one capped plus-strand for each genomic segments and polymerase complexes, the polymerase switches mode and catalyzes the synthesis of complementary minus-strands. This chain is RNA-directed RNA polymerase VP2 (S2), found in Lymantria dispar (Gypsy moth).